A 637-amino-acid chain; its full sequence is Probable polypeptide N-acetylgalactosaminyltransferase 8 (637 aa).

Over 1-6 (MMFWRK) the chain is Cytoplasmic. Residues 7 to 29 (LPKALFIGLTLAIAVNLLLVFSS) traverse the membrane as a helical; Signal-anchor for type II membrane protein segment. Residues 30–637 (KGTLQNLFTG…VRDWGQTNSQ (608 aa)) lie on the Lumenal side of the membrane. Residues asparagine 85, asparagine 107, and asparagine 160 are each glycosylated (N-linked (GlcNAc...) asparagine). Cystine bridges form between cysteine 171–cysteine 404, cysteine 395–cysteine 474, cysteine 509–cysteine 525, cysteine 556–cysteine 571, and cysteine 599–cysteine 617. The catalytic subdomain A stretch occupies residues 180 to 294 (LPSLSVILIF…VGWAEPILAR (115 aa)). Residues aspartate 221 and arginine 255 each contribute to the substrate site. Mn(2+)-binding residues include aspartate 278, histidine 280, and histidine 409. Residues 351-412 (PVKSPSIMGI…PCSRIAHLER (62 aa)) are catalytic subdomain B. Positions 412 and 417 each coordinate substrate. The 139-residue stretch at 496–634 (GYGRMKNLLD…QHTVRDWGQT (139 aa)) folds into the Ricin B-type lectin domain.

It belongs to the glycosyltransferase 2 family. GalNAc-T subfamily. It depends on Mn(2+) as a cofactor. As to expression, widely expressed. Expressed in heart, skeletal muscle, kidney, liver, small intestine and placenta. Weakly expressed in colon, thymus, spleen, lung and leukocyte.

The protein resides in the golgi apparatus membrane. The enzyme catalyses L-seryl-[protein] + UDP-N-acetyl-alpha-D-galactosamine = a 3-O-[N-acetyl-alpha-D-galactosaminyl]-L-seryl-[protein] + UDP + H(+). The catalysed reaction is L-threonyl-[protein] + UDP-N-acetyl-alpha-D-galactosamine = a 3-O-[N-acetyl-alpha-D-galactosaminyl]-L-threonyl-[protein] + UDP + H(+). It functions in the pathway protein modification; protein glycosylation. Its function is as follows. Probably catalyzes the initial reaction in O-linked oligosaccharide biosynthesis, the transfer of an N-acetyl-D-galactosamine residue to a serine or threonine residue on the protein receptor. The chain is Probable polypeptide N-acetylgalactosaminyltransferase 8 (GALNT8) from Homo sapiens (Human).